A 128-amino-acid polypeptide reads, in one-letter code: MENAGGAEGTESGAAACAATDGPTRRAGADSGYAGFWRPWVDAGGKKEEETPNHAAEAMPDGPGMTAASGKLYQFRHPVRLFWPKSKCYDYLYQEAEALLKNFPIQATISFYEDSDSEDEIEDLTCEN.

A disordered region spans residues 1-63; sequence MENAGGAEGT…HAAEAMPDGP (63 aa). The span at 9–22 shows a compositional bias: low complexity; that stretch reads GTESGAAACAATDG. Positions 37-40 match the WRPW motif motif; the sequence is WRPW. The ripply homology domain stretch occupies residues 77–112; that stretch reads HPVRLFWPKSKCYDYLYQEAEALLKNFPIQATISFY.

The protein belongs to the ripply family.

Its subcellular location is the nucleus. Plays a role in somitogenesis. Required for somite segregation and establishment of rostrocaudal polarity in somites. The sequence is that of Protein ripply2 (RIPPLY2) from Homo sapiens (Human).